Reading from the N-terminus, the 20-residue chain is GMP synthase [glutamine-hydrolyzing] (20 aa).

In terms of domain architecture, GMPS ATP-PPase spans 1–20 (ALGDQLLSVFVDHTLVDEVA).

In terms of assembly, homodimer.

It carries out the reaction XMP + L-glutamine + ATP + H2O = GMP + L-glutamate + AMP + diphosphate + 2 H(+). The protein operates within purine metabolism; GMP biosynthesis; GMP from XMP (L-Gln route): step 1/1. Catalyzes the synthesis of GMP from XMP. This is GMP synthase [glutamine-hydrolyzing] (guaA) from Fructilactobacillus sanfranciscensis (Lactobacillus sanfranciscensis).